The sequence spans 529 residues: Putative UPF0481 protein At3g02645 (529 aa).

N-linked (GlcNAc...) asparagine glycosylation is found at Asn365 and Asn403. A helical membrane pass occupies residues 498-518; the sequence is ILAFLAAVLLLMLVSLQLFSL.

This sequence belongs to the UPF0481 family.

It is found in the membrane. This Arabidopsis thaliana (Mouse-ear cress) protein is Putative UPF0481 protein At3g02645.